The chain runs to 230 residues: Ubiquitin carboxyl-terminal hydrolase isozyme L3 (230 aa).

A UCH catalytic domain is found at arginine 5–alanine 229. Residues proline 8–proline 13 are interaction with ubiquitin. Cysteine 95 acts as the Nucleophile in catalysis. At serine 130 the chain carries Phosphoserine. Residues alanine 152–alanine 159 are interaction with ubiquitin. Crossover loop which restricts access of large ubiquitin adducts to the active site. Histidine 169 functions as the Proton donor in the catalytic mechanism. The interval glutamate 219–alanine 224 is interaction with ubiquitin.

It belongs to the peptidase C12 family. Preferentially binds diubiquitin; the interaction does not hydrolyze diubiquitin but, in vitro, inhibits the hydrolyzing activity on other substrates. Ubiquitously expressed, with highest levels in brain, liver, heart, thymus, kidney and testis. Highly expressed in the cauda epididymidis, in meiotic pachytene spermatocytes and post-meiotic spematids. In the retina, enriched in the photoreceptor inner segment.

It localises to the cytoplasm. It carries out the reaction Thiol-dependent hydrolysis of ester, thioester, amide, peptide and isopeptide bonds formed by the C-terminal Gly of ubiquitin (a 76-residue protein attached to proteins as an intracellular targeting signal).. Its activity is regulated as follows. Inhibited by monoubiquitin and diubiquitin. Functionally, deubiquitinating enzyme (DUB) that controls levels of cellular ubiquitin through processing of ubiquitin precursors and ubiquitinated proteins. Thiol protease that recognizes and hydrolyzes a peptide bond at the C-terminal glycine of either ubiquitin or NEDD8. Has a 10-fold preference for Arg and Lys at position P3'', and exhibits a preference towards 'Lys-48'-linked ubiquitin chains. Deubiquitinates ENAC in apical compartments, thereby regulating apical membrane recycling. Indirectly increases the phosphorylation of IGFIR, AKT and FOXO1 and promotes insulin-signaling and insulin-induced adipogenesis. Required for stress-response retinal, skeletal muscle and germ cell maintenance. May be involved in working memory. Can hydrolyze UBB(+1), a mutated form of ubiquitin which is not effectively degraded by the proteasome. The sequence is that of Ubiquitin carboxyl-terminal hydrolase isozyme L3 (Uchl3) from Mus musculus (Mouse).